The chain runs to 305 residues: tRNA dimethylallyltransferase (305 aa).

An ATP-binding site is contributed by Gly-13–Thr-20. A substrate-binding site is contributed by Thr-15 to Thr-20. Residues Asp-39–Gln-42 form an interaction with substrate tRNA region.

This sequence belongs to the IPP transferase family. Monomer. It depends on Mg(2+) as a cofactor.

It carries out the reaction adenosine(37) in tRNA + dimethylallyl diphosphate = N(6)-dimethylallyladenosine(37) in tRNA + diphosphate. In terms of biological role, catalyzes the transfer of a dimethylallyl group onto the adenine at position 37 in tRNAs that read codons beginning with uridine, leading to the formation of N6-(dimethylallyl)adenosine (i(6)A). The sequence is that of tRNA dimethylallyltransferase from Neorickettsia sennetsu (strain ATCC VR-367 / Miyayama) (Ehrlichia sennetsu).